The sequence spans 628 residues: ATP-dependent zinc metalloprotease FtsH 4 (628 aa).

The Cytoplasmic segment spans residues 1–14 (MAIKPQPQWQRRLA). A helical transmembrane segment spans residues 15–35 (SVLLWGSTIYLLVNLLAPALF). Residues 36–119 (RSQPPQVPYS…AAAPPAKNSW (84 aa)) are Lumenal-facing. A helical membrane pass occupies residues 120–140 (FGTLLSWVIPPLIFVGIWSFF). The Cytoplasmic segment spans residues 141–628 (LNRNNNGAPG…QVQAPGTLVV (488 aa)). ATP is bound at residue 214 to 221 (GPPGTGKT). His438 provides a ligand contact to Zn(2+). Glu439 is a catalytic residue. Zn(2+) contacts are provided by His442 and Asp515.

This sequence in the central section; belongs to the AAA ATPase family. In the C-terminal section; belongs to the peptidase M41 family. Homohexamer. Zn(2+) is required as a cofactor.

The protein resides in the cellular thylakoid membrane. Its function is as follows. Acts as a processive, ATP-dependent zinc metallopeptidase for both cytoplasmic and membrane proteins. Plays a role in the quality control of integral membrane proteins. The polypeptide is ATP-dependent zinc metalloprotease FtsH 4 (Synechocystis sp. (strain ATCC 27184 / PCC 6803 / Kazusa)).